The chain runs to 922 residues: Translation initiation factor IF-2 (922 aa).

Residues Lys-33–Glu-310 are disordered. Positions Pro-75–Pro-87 are enriched in low complexity. 2 stretches are compositionally biased toward pro residues: residues Gly-88–Gln-98 and Thr-140–Lys-150. 2 stretches are compositionally biased toward low complexity: residues Pro-151–Pro-169 and Pro-202–Lys-211. Gly residues-rich tracts occupy residues Lys-215–Arg-225 and Phe-248–Gly-292. Residues Arg-296–Lys-305 show a composition bias toward basic residues. The tr-type G domain maps to Gln-418–Asp-590. Positions Gly-427–Thr-434 are G1. Gly-427 to Thr-434 contacts GTP. Residues Gly-452–His-456 form a G2 region. The tract at residues Asp-477–Gly-480 is G3. Residues Asp-477–His-481 and Asn-531–Asp-534 each bind GTP. A G4 region spans residues Asn-531–Asp-534. Positions Ser-567–Lys-569 are G5.

It belongs to the TRAFAC class translation factor GTPase superfamily. Classic translation factor GTPase family. IF-2 subfamily.

Its subcellular location is the cytoplasm. One of the essential components for the initiation of protein synthesis. Protects formylmethionyl-tRNA from spontaneous hydrolysis and promotes its binding to the 30S ribosomal subunits. Also involved in the hydrolysis of GTP during the formation of the 70S ribosomal complex. The chain is Translation initiation factor IF-2 from Corynebacterium jeikeium (strain K411).